Here is a 1745-residue protein sequence, read N- to C-terminus: ADAMTS-like protein 1 (1745 aa).

An N-terminal signal peptide occupies residues 1–28 (MECCRRAAPGTPLLVLAFLLLSSRTARS). The 50-residue stretch at 33–82 (EGLWDAWGPWSECSRTCGGGASYSLRRCLSSKSCEGRNIRYRTCSNVDCP) folds into the TSP type-1 1 domain. 3 cysteine pairs are disulfide-bonded: cysteine 45–cysteine 76, cysteine 49–cysteine 81, and cysteine 60–cysteine 66. N-linked (GlcNAc...) asparagine glycosylation is present at asparagine 251. O-linked (Fuc...) serine glycosylation is found at serine 310 and serine 391. TSP type-1 domains are found at residues 376-424 (PLPR…MYTP), 436-493 (DCPK…TPCY), 522-584 (EEPS…GPCN), 607-667 (ELYD…DPCP), 703-762 (CPPA…KKDD), and 763-825 (CPSE…ATCA). A glycan (O-linked (Fuc...) threonine) is linked at threonine 451. Disulfide bonds link cysteine 534–cysteine 578, cysteine 538–cysteine 583, and cysteine 549–cysteine 567. 4 disulfide bridges follow: cysteine 775/cysteine 819, cysteine 779/cysteine 824, cysteine 790/cysteine 807, and cysteine 874/cysteine 922. The Ig-like C2-type 1 domain maps to 836–938 (PHIAAARNIY…EQFVIKLIGG (103 aa)). Disordered regions lie at residues 966 to 991 (EALQTHKHQNGIFSNGSKAEKRGLTA) and 1114 to 1137 (VSGFSSSLRSSSGEAGGGSRRPHR). The span at 1115-1126 (SGFSSSLRSSSG) shows a compositional bias: low complexity. 3 consecutive Ig-like C2-type domains span residues 1139–1241 (PAIL…IAVT), 1261–1352 (PTVT…TQLL), and 1378–1468 (PSVL…ASLV). Cystine bridges form between cysteine 1177–cysteine 1225, cysteine 1283–cysteine 1336, and cysteine 1401–cysteine 1452. 2 TSP type-1 domains span residues 1528–1591 (CPSR…QLCV) and 1649–1709 (CSVH…TPCE). The PLAC domain occupies 1709 to 1745 (ENTECRDTTRYCEKVRQLKLCQLGQFRSRCCGTCGKA).

As to quaternary structure, monomer. In terms of processing, glycosylated. O-fucosylated by POFUT2 on a serine or a threonine residue found within the consensus sequence C1-X(2)-(S/T)-C2-G of the TSP type-1 repeat domains where C1 and C2 are the first and second cysteine residue of the repeat, respectively. Fucosylated repeats can then be further glycosylated by the addition of a beta-1,3-glucose residue by the glucosyltransferase, B3GALTL. Fucosylation mediates the efficient secretion of ADAMTS family members. Can also be C-glycosylated with one or two mannose molecules on tryptophan residues within the consensus sequence W-X-X-W of the TPRs, and N-glycosylated. These other glycosylations can also facilitate secretion. Disulfide bonds are present.

It localises to the secreted. Its subcellular location is the extracellular space. It is found in the extracellular matrix. This is ADAMTS-like protein 1 (Adamtsl1) from Mus musculus (Mouse).